The primary structure comprises 194 residues: Mitochondrial import inner membrane translocase subunit Tim22 (194 aa).

Cystine bridges form between C69–C141 and C160–C179. 3 consecutive transmembrane segments (helical) span residues 74-94 (VLACVGGFVLGGAFGIFTAGI), 123-143 (MSYAKNFAIVGAMFSCTECLV), and 170-190 (AGVKAGAIGCGGFAAFSAAID).

Belongs to the Tim17/Tim22/Tim23 family. As to quaternary structure, component of the TIM22 complex, whose core is composed of TIMM22, associated with peripheral protein FXC1/TIMM10B and the 70 kDa heterohexamer. In most cases, the 70 kDa complex is composed of TIMM9 and TIMM10 (TIMM10A or TIMM10B). A small fraction of the 70 kDa complex is composed of TIMM8 (TIMM8A/DDP1 or TIMM8B/DDP2) and TIMM13. The TIM22 complex also contains AGK and TIMM29. Interacts directly with TIMM9, TIMM10A and FXC1/TIMM10B. Interacts (when oxidized) with TIMM29; interaction is direct. In terms of processing, disulfide bonds promote efficient assembly of the TIM22 complex.

The protein localises to the mitochondrion inner membrane. In terms of biological role, essential core component of the TIM22 complex, a complex that mediates the import and insertion of multi-pass transmembrane proteins into the mitochondrial inner membrane. In the TIM22 complex, it constitutes the voltage-activated and signal-gated channel. Forms a twin-pore translocase that uses the membrane potential as external driving force in 2 voltage-dependent steps. The protein is Mitochondrial import inner membrane translocase subunit Tim22 (Timm22) of Mus musculus (Mouse).